A 461-amino-acid chain; its full sequence is Cysteine--tRNA ligase (461 aa).

Cys-28 contributes to the Zn(2+) binding site. The 'HIGH' region signature appears at 30 to 40; that stretch reads ITIYDLCHIGH. Positions 209, 234, and 238 each coordinate Zn(2+). Residues 266-270 carry the 'KMSKS' region motif; that stretch reads KMSKS. An ATP-binding site is contributed by Lys-269.

Belongs to the class-I aminoacyl-tRNA synthetase family. As to quaternary structure, monomer. The cofactor is Zn(2+).

The protein resides in the cytoplasm. The enzyme catalyses tRNA(Cys) + L-cysteine + ATP = L-cysteinyl-tRNA(Cys) + AMP + diphosphate. In Yersinia pestis bv. Antiqua (strain Antiqua), this protein is Cysteine--tRNA ligase.